The sequence spans 360 residues: Holliday junction branch migration complex subunit RuvB (360 aa).

The tract at residues 1-46 (MAIKRSGNSDRPAKNPSSTPGTNAPTLLSPTPTHQEKETSEEKIRP) is disordered. Residues 13–205 (AKNPSSTPGT…FGLIQRLRFY (193 aa)) are large ATPase domain (RuvB-L). Polar residues predominate over residues 15–33 (NPSSTPGTNAPTLLSPTPT). The segment covering 34–46 (HQEKETSEEKIRP) has biased composition (basic and acidic residues). ATP-binding positions include Ile-44, Arg-45, Gly-86, Lys-89, Thr-90, Thr-91, 152 to 154 (EDY), Arg-195, Tyr-205, and Arg-242. Thr-90 contacts Mg(2+). Residues 206 to 276 (EVDELTLIVL…LASEALDIYQ (71 aa)) are small ATPAse domain (RuvB-S). The segment at 279–360 (KQGLDWIDRL…LTSEEQLSIF (82 aa)) is head domain (RuvB-H). Residues Arg-334 and Arg-339 each contribute to the DNA site.

The protein belongs to the RuvB family. In terms of assembly, homohexamer. Forms an RuvA(8)-RuvB(12)-Holliday junction (HJ) complex. HJ DNA is sandwiched between 2 RuvA tetramers; dsDNA enters through RuvA and exits via RuvB. An RuvB hexamer assembles on each DNA strand where it exits the tetramer. Each RuvB hexamer is contacted by two RuvA subunits (via domain III) on 2 adjacent RuvB subunits; this complex drives branch migration. In the full resolvosome a probable DNA-RuvA(4)-RuvB(12)-RuvC(2) complex forms which resolves the HJ.

The protein localises to the cytoplasm. It catalyses the reaction ATP + H2O = ADP + phosphate + H(+). Its function is as follows. The RuvA-RuvB-RuvC complex processes Holliday junction (HJ) DNA during genetic recombination and DNA repair, while the RuvA-RuvB complex plays an important role in the rescue of blocked DNA replication forks via replication fork reversal (RFR). RuvA specifically binds to HJ cruciform DNA, conferring on it an open structure. The RuvB hexamer acts as an ATP-dependent pump, pulling dsDNA into and through the RuvAB complex. RuvB forms 2 homohexamers on either side of HJ DNA bound by 1 or 2 RuvA tetramers; 4 subunits per hexamer contact DNA at a time. Coordinated motions by a converter formed by DNA-disengaged RuvB subunits stimulates ATP hydrolysis and nucleotide exchange. Immobilization of the converter enables RuvB to convert the ATP-contained energy into a lever motion, pulling 2 nucleotides of DNA out of the RuvA tetramer per ATP hydrolyzed, thus driving DNA branch migration. The RuvB motors rotate together with the DNA substrate, which together with the progressing nucleotide cycle form the mechanistic basis for DNA recombination by continuous HJ branch migration. Branch migration allows RuvC to scan DNA until it finds its consensus sequence, where it cleaves and resolves cruciform DNA. In Rippkaea orientalis (strain PCC 8801 / RF-1) (Cyanothece sp. (strain PCC 8801)), this protein is Holliday junction branch migration complex subunit RuvB.